The chain runs to 219 residues: NAD(P)H-quinone oxidoreductase subunit I (219 aa).

2 4Fe-4S ferredoxin-type domains span residues 55–84 (GRIH…VDWV) and 95–124 (RNYS…MTEE). Residues cysteine 64, cysteine 67, cysteine 70, cysteine 74, cysteine 104, cysteine 107, cysteine 110, and cysteine 114 each coordinate [4Fe-4S] cluster.

Belongs to the complex I 23 kDa subunit family. As to quaternary structure, NDH-1 is composed of at least 11 different subunits. Requires [4Fe-4S] cluster as cofactor.

The protein resides in the cellular thylakoid membrane. It catalyses the reaction a plastoquinone + NADH + (n+1) H(+)(in) = a plastoquinol + NAD(+) + n H(+)(out). The enzyme catalyses a plastoquinone + NADPH + (n+1) H(+)(in) = a plastoquinol + NADP(+) + n H(+)(out). In terms of biological role, NDH-1 shuttles electrons from an unknown electron donor, via FMN and iron-sulfur (Fe-S) centers, to quinones in the respiratory and/or the photosynthetic chain. The immediate electron acceptor for the enzyme in this species is believed to be plastoquinone. Couples the redox reaction to proton translocation, and thus conserves the redox energy in a proton gradient. This is NAD(P)H-quinone oxidoreductase subunit I from Prochlorococcus marinus (strain SARG / CCMP1375 / SS120).